The primary structure comprises 424 residues: Protein TUNICAMYCIN INDUCED 1 (424 aa).

The first 25 residues, 1–25 (MGHRVLVYVGALFLILFTIFPSSSA), serve as a signal peptide directing secretion. Residues Asn-197, Asn-296, and Asn-406 are each glycosylated (N-linked (GlcNAc...) asparagine).

As to expression, restricted to pollen grains at high levels.

The protein localises to the endoplasmic reticulum. Its function is as follows. Involved in the regulation of pollen surface morphology, probably by modulating the secretion of proteins and/or lipids during pollen development. In Arabidopsis thaliana (Mouse-ear cress), this protein is Protein TUNICAMYCIN INDUCED 1.